The chain runs to 156 residues: ATP synthase subunit b (156 aa).

The chain crosses the membrane as a helical span at residues 7–29 (LLGQAISFALFVWFCMKYVWPPL).

It belongs to the ATPase B chain family. F-type ATPases have 2 components, F(1) - the catalytic core - and F(0) - the membrane proton channel. F(1) has five subunits: alpha(3), beta(3), gamma(1), delta(1), epsilon(1). F(0) has three main subunits: a(1), b(2) and c(10-14). The alpha and beta chains form an alternating ring which encloses part of the gamma chain. F(1) is attached to F(0) by a central stalk formed by the gamma and epsilon chains, while a peripheral stalk is formed by the delta and b chains.

The protein resides in the cell inner membrane. F(1)F(0) ATP synthase produces ATP from ADP in the presence of a proton or sodium gradient. F-type ATPases consist of two structural domains, F(1) containing the extramembraneous catalytic core and F(0) containing the membrane proton channel, linked together by a central stalk and a peripheral stalk. During catalysis, ATP synthesis in the catalytic domain of F(1) is coupled via a rotary mechanism of the central stalk subunits to proton translocation. Functionally, component of the F(0) channel, it forms part of the peripheral stalk, linking F(1) to F(0). This Vibrio alginolyticus protein is ATP synthase subunit b.